The following is a 262-amino-acid chain: MNNRPIRLLTSGRAGLGAGALITAVVLLIALGAVWTPVAFADGCPDAEVTFARGTGEPPGIGRVGQAFVDSLRQQTGMEIGVYPVNYAASRLQLHGGDGANDAISHIKSMASSCPNTKLVLGGYSQGATVIDIVAGVPLGSISFGSPLPAAYADNVAAVAVFGNPSNRAGGSLSSLSPLFGSKAIDLCNPTDPICHVGPGNEFSGHIDGYIPTYTTQAASFVVQRLRAGSVPHLPGSVPQLPGSVLQMPGTAAPAPESLHGR.

The N-terminal stretch at 1 to 41 (MNNRPIRLLTSGRAGLGAGALITAVVLLIALGAVWTPVAFA) is a signal peptide. Cysteine 44 and cysteine 114 are joined by a disulfide. Catalysis depends on serine 125, which acts as the Nucleophile. A disulfide bond links cysteine 188 and cysteine 195. Residue aspartate 192 is part of the active site. Histidine 206 serves as the catalytic Proton donor/acceptor. The disordered stretch occupies residues 241–262 (LPGSVLQMPGTAAPAPESLHGR).

The protein belongs to the cutinase family.

Its subcellular location is the secreted. Shows weak esterase activity with the p-nitrophenol-linked aliphatic ester pNP-butyrate. Does not exhibit cutinase activity. The polypeptide is Probable carboxylesterase Culp3 (cut3) (Mycobacterium tuberculosis (strain ATCC 25618 / H37Rv)).